Reading from the N-terminus, the 207-residue chain is Small ribosomal subunit protein uS4 (207 aa).

The disordered stretch occupies residues 30–54 (DKCKLDSKPGQHGRTSGARTSDYGN). Residues 42–53 (GRTSGARTSDYG) are compositionally biased toward polar residues. Positions 97-160 (SRLDNVVYRM…KKQVRIAEAL (64 aa)) constitute an S4 RNA-binding domain.

It belongs to the universal ribosomal protein uS4 family. As to quaternary structure, part of the 30S ribosomal subunit. Contacts protein S5. The interaction surface between S4 and S5 is involved in control of translational fidelity.

One of the primary rRNA binding proteins, it binds directly to 16S rRNA where it nucleates assembly of the body of the 30S subunit. In terms of biological role, with S5 and S12 plays an important role in translational accuracy. This Cupriavidus taiwanensis (strain DSM 17343 / BCRC 17206 / CCUG 44338 / CIP 107171 / LMG 19424 / R1) (Ralstonia taiwanensis (strain LMG 19424)) protein is Small ribosomal subunit protein uS4.